Consider the following 120-residue polypeptide: Chaperonin GroEL (120 aa).

Residue 23 to 27 participates in ATP binding; it reads DGTTT.

The protein belongs to the chaperonin (HSP60) family. Forms a cylinder of 14 subunits composed of two heptameric rings stacked back-to-back. Interacts with the co-chaperonin GroES.

It localises to the cytoplasm. It carries out the reaction ATP + H2O + a folded polypeptide = ADP + phosphate + an unfolded polypeptide.. Its function is as follows. Together with its co-chaperonin GroES, plays an essential role in assisting protein folding. The GroEL-GroES system forms a nano-cage that allows encapsulation of the non-native substrate proteins and provides a physical environment optimized to promote and accelerate protein folding. This is Chaperonin GroEL from Mycolicibacterium rhodesiae (Mycobacterium rhodesiae).